Here is a 496-residue protein sequence, read N- to C-terminus: Fatty acyl-CoA reductase 8 (496 aa).

It belongs to the fatty acyl-CoA reductase family.

The catalysed reaction is a long-chain fatty acyl-CoA + 2 NADPH + 2 H(+) = a long-chain primary fatty alcohol + 2 NADP(+) + CoA. Catalyzes the reduction of fatty acyl-CoA to fatty alcohols. Catalyzes specifically the formation of C16:0 fatty alcohol. The protein is Fatty acyl-CoA reductase 8 (FAR8) of Arabidopsis thaliana (Mouse-ear cress).